Consider the following 184-residue polypeptide: GTP cyclohydrolase 1 (184 aa).

The Zn(2+) site is built by Cys75, His78, and Cys146.

It belongs to the GTP cyclohydrolase I family. Toroid-shaped homodecamer, composed of two pentamers of five dimers.

It catalyses the reaction GTP + H2O = 7,8-dihydroneopterin 3'-triphosphate + formate + H(+). It participates in cofactor biosynthesis; 7,8-dihydroneopterin triphosphate biosynthesis; 7,8-dihydroneopterin triphosphate from GTP: step 1/1. The protein is GTP cyclohydrolase 1 of Pseudoalteromonas atlantica (strain T6c / ATCC BAA-1087).